Consider the following 204-residue polypeptide: Elongation factor Ts (204 aa).

The tract at residues 87-90 is involved in Mg(2+) ion dislocation from EF-Tu; the sequence is TDFV.

Belongs to the EF-Ts family.

The protein localises to the cytoplasm. Functionally, associates with the EF-Tu.GDP complex and induces the exchange of GDP to GTP. It remains bound to the aminoacyl-tRNA.EF-Tu.GTP complex up to the GTP hydrolysis stage on the ribosome. The polypeptide is Elongation factor Ts (Frankia alni (strain DSM 45986 / CECT 9034 / ACN14a)).